A 126-amino-acid chain; its full sequence is Holo-[acyl-carrier-protein] synthase (126 aa).

Mg(2+) is bound by residues aspartate 9 and glutamate 58.

Belongs to the P-Pant transferase superfamily. AcpS family. The cofactor is Mg(2+).

The protein localises to the cytoplasm. The enzyme catalyses apo-[ACP] + CoA = holo-[ACP] + adenosine 3',5'-bisphosphate + H(+). In terms of biological role, transfers the 4'-phosphopantetheine moiety from coenzyme A to a Ser of acyl-carrier-protein. This is Holo-[acyl-carrier-protein] synthase from Escherichia coli O17:K52:H18 (strain UMN026 / ExPEC).